A 267-amino-acid polypeptide reads, in one-letter code: Large ribosomal subunit protein uL3 (267 aa).

Residues Asn-124–Leu-147 form a disordered region.

This sequence belongs to the universal ribosomal protein uL3 family. Part of the 50S ribosomal subunit. Forms a cluster with proteins L14 and L19.

One of the primary rRNA binding proteins, it binds directly near the 3'-end of the 23S rRNA, where it nucleates assembly of the 50S subunit. The chain is Large ribosomal subunit protein uL3 from Mycoplasmopsis agalactiae (strain NCTC 10123 / CIP 59.7 / PG2) (Mycoplasma agalactiae).